We begin with the raw amino-acid sequence, 299 residues long: Regucalcin (299 aa).

Glu-18 contacts a divalent metal cation. Substrate-binding residues include Arg-101, Asn-103, and Glu-121. Lys-144 is modified (N6-succinyllysine). Asn-154 and Asp-204 together coordinate a divalent metal cation. Asp-204 (proton donor/acceptor) is an active-site residue. An N6-succinyllysine mark is found at Lys-244 and Lys-253.

This sequence belongs to the SMP-30/CGR1 family. In terms of assembly, monomer. Zn(2+) is required as a cofactor. Requires Mn(2+) as cofactor. The cofactor is Ca(2+). It depends on Mg(2+) as a cofactor.

The protein localises to the cytoplasm. It carries out the reaction D-glucono-1,5-lactone + H2O = D-gluconate + H(+). Gluconolactonase with low activity towards other sugar lactones, including gulonolactone and galactonolactone. Can also hydrolyze diisopropyl phosphorofluoridate and phenylacetate (in vitro). Calcium-binding protein. Modulates Ca(2+) signaling, and Ca(2+)-dependent cellular processes and enzyme activities. This is Regucalcin (RGN) from Homo sapiens (Human).